Here is a 391-residue protein sequence, read N- to C-terminus: Carbamoyl phosphate synthase small chain (391 aa).

Residues 1-199 are CPSase; it reads MVRISGFCCA…TWEFIEGPTT (199 aa). L-glutamine-binding residues include serine 61, glycine 251, and glycine 253. Residues 203–388 form the Glutamine amidotransferase type-1 domain; it reads TVVAIDFGVK…VALMRDRQPT (186 aa). Cysteine 279 (nucleophile) is an active-site residue. L-glutamine-binding residues include leucine 280, glutamine 283, asparagine 319, glycine 321, and phenylalanine 322. Active-site residues include histidine 361 and glutamate 363.

It belongs to the CarA family. As to quaternary structure, composed of two chains; the small (or glutamine) chain promotes the hydrolysis of glutamine to ammonia, which is used by the large (or ammonia) chain to synthesize carbamoyl phosphate. Tetramer of heterodimers (alpha,beta)4.

It carries out the reaction hydrogencarbonate + L-glutamine + 2 ATP + H2O = carbamoyl phosphate + L-glutamate + 2 ADP + phosphate + 2 H(+). It catalyses the reaction L-glutamine + H2O = L-glutamate + NH4(+). The protein operates within amino-acid biosynthesis; L-arginine biosynthesis; carbamoyl phosphate from bicarbonate: step 1/1. It participates in pyrimidine metabolism; UMP biosynthesis via de novo pathway; (S)-dihydroorotate from bicarbonate: step 1/3. Its function is as follows. Small subunit of the glutamine-dependent carbamoyl phosphate synthetase (CPSase). CPSase catalyzes the formation of carbamoyl phosphate from the ammonia moiety of glutamine, carbonate, and phosphate donated by ATP, constituting the first step of 2 biosynthetic pathways, one leading to arginine and/or urea and the other to pyrimidine nucleotides. The small subunit (glutamine amidotransferase) binds and cleaves glutamine to supply the large subunit with the substrate ammonia. In Synechococcus sp. (strain ATCC 27144 / PCC 6301 / SAUG 1402/1) (Anacystis nidulans), this protein is Carbamoyl phosphate synthase small chain.